Consider the following 360-residue polypeptide: UDP-N-acetylglucosamine--N-acetylmuramyl-(pentapeptide) pyrophosphoryl-undecaprenol N-acetylglucosamine transferase (360 aa).

UDP-N-acetyl-alpha-D-glucosamine-binding positions include 14–16 (TGG), N131, R167, S195, I249, and Q294.

Belongs to the glycosyltransferase 28 family. MurG subfamily.

It is found in the cell inner membrane. The enzyme catalyses di-trans,octa-cis-undecaprenyl diphospho-N-acetyl-alpha-D-muramoyl-L-alanyl-D-glutamyl-meso-2,6-diaminopimeloyl-D-alanyl-D-alanine + UDP-N-acetyl-alpha-D-glucosamine = di-trans,octa-cis-undecaprenyl diphospho-[N-acetyl-alpha-D-glucosaminyl-(1-&gt;4)]-N-acetyl-alpha-D-muramoyl-L-alanyl-D-glutamyl-meso-2,6-diaminopimeloyl-D-alanyl-D-alanine + UDP + H(+). Its pathway is cell wall biogenesis; peptidoglycan biosynthesis. In terms of biological role, cell wall formation. Catalyzes the transfer of a GlcNAc subunit on undecaprenyl-pyrophosphoryl-MurNAc-pentapeptide (lipid intermediate I) to form undecaprenyl-pyrophosphoryl-MurNAc-(pentapeptide)GlcNAc (lipid intermediate II). In Polaromonas naphthalenivorans (strain CJ2), this protein is UDP-N-acetylglucosamine--N-acetylmuramyl-(pentapeptide) pyrophosphoryl-undecaprenol N-acetylglucosamine transferase.